A 65-amino-acid polypeptide reads, in one-letter code: Beta-defensin 106A (65 aa).

The N-terminal stretch at 1 to 20 (MRTFLFLFVVLFFLTPAKNA) is a signal peptide. 3 disulfide bridges follow: C26–C53, C33–C47, and C37–C54.

Belongs to the beta-defensin family. In terms of assembly, monomer. Interacts with CCR2 (via extracellular N-terminal region); this interaction may preferentially require specific tyrosine sulfation on CCR2.

The protein resides in the secreted. It is found in the membrane. Has antibacterial activity. Acts as a ligand for C-C chemokine receptor CCR2. The chain is Beta-defensin 106A (DEFB106A) from Hylobates lar (Lar gibbon).